The sequence spans 341 residues: Phosphate acyltransferase (341 aa).

The protein belongs to the PlsX family. Homodimer. Probably interacts with PlsY.

The protein resides in the cytoplasm. The catalysed reaction is a fatty acyl-[ACP] + phosphate = an acyl phosphate + holo-[ACP]. It functions in the pathway lipid metabolism; phospholipid metabolism. Catalyzes the reversible formation of acyl-phosphate (acyl-PO(4)) from acyl-[acyl-carrier-protein] (acyl-ACP). This enzyme utilizes acyl-ACP as fatty acyl donor, but not acyl-CoA. In Photobacterium profundum (strain SS9), this protein is Phosphate acyltransferase.